Reading from the N-terminus, the 660-residue chain is Kinesin-like protein KIF2A (660 aa).

The tract at residues 1–140 (MVTSLNEDNE…QQELREKRAQ (140 aa)) is disordered. The interval 1–171 (MVTSLNEDNE…LDYRPLTTAD (171 aa)) is globular. Ser48 is subject to Phosphoserine. A phosphothreonine mark is found at Thr51 and Thr70. Ser73 is subject to Phosphoserine. An N6-acetyllysine modification is found at Lys75. A compositionally biased stretch (polar residues) spans 96 to 106 (LPEQSSSAQQN). Positions 113–140 (CVKEVEKLQEKREKRRLQQQELREKRAQ) are enriched in basic and acidic residues. In terms of domain architecture, Kinesin motor spans 177 to 507 (RICVCVRKRP…LRYANRVKEL (331 aa)). Residue 267–274 (GQTGSGKT) coordinates ATP. A coiled-coil region spans residues 614-653 (ATQLEAILEQKIDILTELRDKVKSFRAALQEEEQASKQIN).

This sequence belongs to the TRAFAC class myosin-kinesin ATPase superfamily. Kinesin family. MCAK/KIF2 subfamily. As to quaternary structure, interacts with AURKA and PLK1. Interacts with PSRC1. Interacts with MCRS1; the interaction enhances recruitment of KIF2A to the minus ends of spindle microtubules which promotes chromosome alignment.

The protein resides in the cytoplasm. It is found in the cytoskeleton. Its subcellular location is the microtubule organizing center. It localises to the centrosome. The protein localises to the spindle pole. The protein resides in the spindle. Its function is as follows. Plus end-directed microtubule-dependent motor required for normal brain development. May regulate microtubule dynamics during axonal growth. Required for normal progression through mitosis. Required for normal congress of chromosomes at the metaphase plate. Required for normal spindle dynamics during mitosis. Promotes spindle turnover. Implicated in formation of bipolar mitotic spindles. Has microtubule depolymerization activity. This chain is Kinesin-like protein KIF2A (KIF2A), found in Bos taurus (Bovine).